Reading from the N-terminus, the 514-residue chain is MSISSDEVNFLVYRYLQESGFSHSAFTFGIESHISQSNINGALVPPAALISIIQKGLQYVEAEVSINEDGTLFDGRPIESLSLIDAVMPDVVQTRQQAYRDKLAQQQAAAAAAAAAAASQQGSAKNGENTANGEENGAHTIANNHTDMMEVDGDVEIPPNKAVVLRGHESEVFICAWNPVSDLLASGSGDSTARIWNLSENSTSGSTQLVLRHCIREGGQDVPSNKDVTSLDWNSEGTLLATGSYDGFARIWTKDGNLASTLGQHKGPIFALKWNKKGNFILSAGVDKTTIIWDAHTGEAKQQFPFHSAPALDVDWQSNNTFASCSTDMCIHVCKLGQDRPIKTFQGHTNEVNAIKWDPTGNLLASCSDDMTLKIWSMKQDNCVHDLQAHNKEIYTIKWSPTGPGTNNPNANLMLASASFDSTVRLWDVDRGICIHTLTKHQEPVYSVAFSPDGRYLASGSFDKCVHIWNTQTGALVHSYRGTGGIFEVCWNAAGDKVGASASDGSVCVLDLRK.

An N-acetylserine modification is found at S2. Residues 4-36 (SSDEVNFLVYRYLQESGFSHSAFTFGIESHISQ) enclose the LisH domain. An F-box-like domain is found at 41–86 (GALVPPAALISIIQKGLQYVEAEVSINEDGTLFDGRPIESLSLIDA). N6-acetyllysine is present on K102. S119 is modified (phosphoserine). Residues 120-135 (QQGSAKNGENTANGEE) show a composition bias toward low complexity. Residues 120–139 (QQGSAKNGENTANGEENGAH) form a disordered region. 8 WD repeats span residues 167-206 (GHES…TSGS), 223-262 (PSNK…ASTL), 264-303 (QHKG…AKQQ), 306-344 (FHSA…PIKT), 347-386 (GHTN…CVHD), 389-437 (AHNK…CIHT), 440-479 (KHQE…LVHS), and 481-513 (RGTG…LDLR). K277 is covalently cross-linked (Glycyl lysine isopeptide (Lys-Gly) (interchain with G-Cter in SUMO2)).

It belongs to the WD repeat EBI family. Component of the N-Cor repressor complex, at least composed of NCOR1, NCOR2, HDAC3, TBL1X, TBL1XR1, CORO2A and GPS2. Probable component of some E3 ubiquitin ligase complex. Interacts with histones H2B and H4. Interacts with MECP2; bridges interaction between MECP2 and NCOR1. Interacts with USP44. In terms of tissue distribution, widely expressed including the pituitary, hypothalamus, white and brown adipose tissue, muscle and liver.

The protein localises to the nucleus. Its function is as follows. F-box-like protein involved in the recruitment of the ubiquitin/19S proteasome complex to nuclear receptor-regulated transcription units. Plays an essential role in transcription activation mediated by nuclear receptors. Probably acts as integral component of the N-Cor corepressor complex that mediates the recruitment of the 19S proteasome complex, leading to the subsequent proteasomal degradation of N-Cor complex, thereby allowing cofactor exchange, and transcription activation. The protein is F-box-like/WD repeat-containing protein TBL1XR1 (TBL1XR1) of Homo sapiens (Human).